A 491-amino-acid polypeptide reads, in one-letter code: Cytochrome P450 2K3 (491 aa).

A heme-binding site is contributed by Cys434.

This sequence belongs to the cytochrome P450 family. It depends on heme as a cofactor.

Its subcellular location is the endoplasmic reticulum membrane. The protein localises to the microsome membrane. It carries out the reaction an organic molecule + reduced [NADPH--hemoprotein reductase] + O2 = an alcohol + oxidized [NADPH--hemoprotein reductase] + H2O + H(+). This is Cytochrome P450 2K3 (cyp2k3) from Oncorhynchus mykiss (Rainbow trout).